We begin with the raw amino-acid sequence, 667 residues long: WD40 repeat-containing protein DDB_G0271002 (667 aa).

WD repeat units follow at residues 165-204 (NHGV…PQET) and 210-249 (KHKH…LLRI). The segment covering 278–293 (SSNSRDNNNNNSNSNN) has biased composition (low complexity). Disordered regions lie at residues 278–301 (SSNS…GIII), 316–345 (LVEN…DNDD), and 389–440 (DIIF…ATTT). Positions 325–345 (PMPEEEEEEEEEEVNQVDNDD) are enriched in acidic residues. Residues 400-410 (NQHQQQQQQNQ) show a composition bias toward low complexity. A compositionally biased stretch (acidic residues) spans 411-428 (EIEEEGQEGQEEQEDGTE). Residues 429-440 (NENNQGTIATTT) show a composition bias toward low complexity.

This is WD40 repeat-containing protein DDB_G0271002 from Dictyostelium discoideum (Social amoeba).